The sequence spans 147 residues: AP-2 complex subunit sigma (147 aa).

The protein belongs to the adaptor complexes small subunit family. Adaptor protein complex 2 (AP-2) is a heterotetramer composed of two large adaptins (alpha-type subunit APL3 and beta-type subunit APL1), a medium chain (mu-type subunit APM4) and a small adaptin (sigma-type subunit APS2). Interacts with APL1.

It localises to the cell membrane. The protein localises to the membrane. Its subcellular location is the coated pit. Component of the adaptor complexes which link clathrin to receptors in coated vesicles. Clathrin-associated protein complexes are believed to interact with the cytoplasmic tails of membrane proteins, leading to their selection and concentration. The sequence is that of AP-2 complex subunit sigma (APS2) from Saccharomyces cerevisiae (strain ATCC 204508 / S288c) (Baker's yeast).